The chain runs to 163 residues: MALRMWASSAANALGVSCAPKSHLLPALSLSRCFSTVLDGLKYASSHEWVKHGGSVATIGITDHAQGHLGDVVFAELPEGGAVSAGKPFASVESVKATSDVNSPISGEIVEVNTKLSDSPGLLNSSPYEEGWMVKVKPSNPAELESLMGSKEYTKFCEEEDAH.

A mitochondrion-targeting transit peptide spans 1–34 (MALRMWASSAANALGVSCAPKSHLLPALSLSRCF). Residues 56-137 (VATIGITDHA…YEEGWMVKVK (82 aa)) form the Lipoyl-binding domain. Lys-96 carries the post-translational modification N6-lipoyllysine.

This sequence belongs to the GcvH family. In terms of assembly, the glycine cleavage system is composed of four proteins: P, T, L and H. (R)-lipoate is required as a cofactor.

Its subcellular location is the mitochondrion. Its function is as follows. The glycine cleavage system catalyzes the degradation of glycine. The H protein shuttles the methylamine group of glycine from the P protein to the T protein. In Mesembryanthemum crystallinum (Common ice plant), this protein is Glycine cleavage system H protein, mitochondrial (GDCSH).